The chain runs to 182 residues: Core-binding factor subunit beta (182 aa).

At Ala173 the chain carries Phosphoserine.

It belongs to the CBF-beta family. In terms of assembly, heterodimer with RUNX1, RUNX2 and RUNX3. Interacts with COPRS. Found in a complex with PRMT5 and RUNX1. As to quaternary structure, (Microbial infection) Interacts with HIV-1 Vif; forming an active cullin-5-RING E3 ubiquitin-protein ligase complex (ECS complex).

Its subcellular location is the nucleus. Its function is as follows. Forms the heterodimeric complex core-binding factor (CBF) with RUNX family proteins (RUNX1, RUNX2, and RUNX3). RUNX members modulate the transcription of their target genes through recognizing the core consensus binding sequence 5'-TGTGGT-3', or very rarely, 5'-TGCGGT-3', within their regulatory regions via their runt domain, while CBFB is a non-DNA-binding regulatory subunit that allosterically enhances the sequence-specific DNA-binding capacity of RUNX. The heterodimers bind to the core site of a number of enhancers and promoters, including murine leukemia virus, polyomavirus enhancer, T-cell receptor enhancers, LCK, IL3 and GM-CSF promoters. CBF complexes repress ZBTB7B transcription factor during cytotoxic (CD8+) T cell development. They bind to RUNX-binding sequence within the ZBTB7B locus acting as transcriptional silencer and allowing for cytotoxic T cell differentiation. In terms of biological role, (Microbial infection) Following infection, hijacked by the HIV-1 Vif protein, leading to the formation a cullin-5-RING E3 ubiquitin-protein ligase complex (ECS complex) that catalyzes ubiquitination and degradation of APOBEC3F and APOBEC3G. The complex can also ubiquitinate APOBEC3H to some extent. Association with HIV-1 Vif protein also inhibits the transcription coactivator activity of CBFB/CBF-beta. This chain is Core-binding factor subunit beta (CBFB), found in Homo sapiens (Human).